The following is a 311-amino-acid chain: Pyrimidine-specific ribonucleoside hydrolase RihA (311 aa).

Residue H240 is part of the active site.

It belongs to the IUNH family. RihA subfamily.

Its function is as follows. Hydrolyzes cytidine or uridine to ribose and cytosine or uracil, respectively. The protein is Pyrimidine-specific ribonucleoside hydrolase RihA of Salmonella arizonae (strain ATCC BAA-731 / CDC346-86 / RSK2980).